The primary structure comprises 144 residues: Putative pre-16S rRNA nuclease (144 aa).

Belongs to the YqgF nuclease family.

It is found in the cytoplasm. In terms of biological role, could be a nuclease involved in processing of the 5'-end of pre-16S rRNA. In Wigglesworthia glossinidia brevipalpis, this protein is Putative pre-16S rRNA nuclease.